We begin with the raw amino-acid sequence, 475 residues long: MATGSLRGLAVAGGGESSDSEDDGWEIGYLDRPPQKLKGPLPIEEKNETFKKALTTGDTSLVKELLDSGISVDSSFRYGWTPLMYAASVANVELVRVLLDRGANASFDKDKQTILITACSARGSEEQILKCVELLLSRNADPNVACRRLMTPIMYAARDGHPQVVALLVAHGAEVNIQDENGYTALTWAARQGHKSVVLKLLELGANKTLQTKDGKTPSEIAKRNKHLEIFNLLSLTLNPLEGKLQQLTKEETICKLLTTDSDKEKDHIFSSYTAFGDLEIFLHGLGLEHMTDLLKERDITLRHLLTMRKDEFTQNGITSKDQQKILAALKELEVEEIKFGELPEVAKLEISGDEFLNFLLKLNKQCGHLITAVQNIITELPVNSHKIVLEWASPRNFTSVCEELVSNVEDLNEEVCKLKDLIQKLQNERENDPTHIPLMEEVSTWNSKILKRTAVTVCGFGFLLFICKLTFQRK.

The interval 1–38 is disordered; sequence MATGSLRGLAVAGGGESSDSEDDGWEIGYLDRPPQKLK. Phosphoserine is present on residues Ser17, Ser18, and Ser20. ANK repeat units follow at residues 45–74, 78–107, 110–144, 148–177, 181–210, and 214–243; these read EKNE…SVDS, YGWT…NASF, DKQT…DPNV, RLMT…EVNI, NGYT…NKTL, and DGKT…PLEG. One can recognise an SAM domain in the interval 272–334; the sequence is SYTAFGDLEI…KILAALKELE (63 aa).

In terms of assembly, interacts with DDX4, PIWIL1, RANBP9 and TDRD1.

Its subcellular location is the cytoplasm. Its function is as follows. Plays a central role during spermatogenesis by repressing transposable elements and preventing their mobilization, which is essential for the germline integrity. Acts via the piRNA metabolic process, which mediates the repression of transposable elements during meiosis by forming complexes composed of piRNAs and Piwi proteins and governs the methylation and subsequent repression of transposons. Its association with pi-bodies suggests a participation in the primary piRNAs metabolic process. Required prior to the pachytene stage to facilitate the production of multiple types of piRNAs, including those associated with repeats involved in the regulation of retrotransposons. May act by mediating protein-protein interactions during germ cell maturation. This is Ankyrin repeat, SAM and basic leucine zipper domain-containing protein 1 (ASZ1) from Oryctolagus cuniculus (Rabbit).